A 222-amino-acid chain; its full sequence is Cytochrome b6 (222 aa).

The chain crosses the membrane as a helical span at residues 39-59 (IFYCLGGITLVCFLVQFATGF). Heme c is bound at residue Cys-42. Heme b-binding residues include His-93 and His-107. The next 3 helical transmembrane spans lie at 97-117 (ASMM…TGGF), 123-143 (LTWM…VTGY), and 193-213 (LHTF…FLMI). Heme b-binding residues include His-194 and His-209.

It belongs to the cytochrome b family. PetB subfamily. In terms of assembly, the 4 large subunits of the cytochrome b6-f complex are cytochrome b6, subunit IV (17 kDa polypeptide, PetD), cytochrome f and the Rieske protein, while the 4 small subunits are PetG, PetL, PetM and PetN. The complex functions as a dimer. Heme b is required as a cofactor. The cofactor is heme c.

It localises to the cellular thylakoid membrane. Its function is as follows. Component of the cytochrome b6-f complex, which mediates electron transfer between photosystem II (PSII) and photosystem I (PSI), cyclic electron flow around PSI, and state transitions. The polypeptide is Cytochrome b6 (Crocosphaera subtropica (strain ATCC 51142 / BH68) (Cyanothece sp. (strain ATCC 51142))).